Here is a 269-residue protein sequence, read N- to C-terminus: Cytochrome c oxidase subunit 3 (269 aa).

6 helical membrane-spanning segments follow: residues 46–66 (NSYY…AFWF), 90–110 (GVIL…WAFF), 138–160 (PLLN…HSLI), 167–187 (ALYG…FQGV), 207–227 (FGTG…AVAL), and 247–267 (ILYW…IYYW).

It belongs to the cytochrome c oxidase subunit 3 family. In terms of assembly, component of the cytochrome c oxidase (complex IV, CIV), a multisubunit enzyme composed of a catalytic core of 3 subunits and several supernumerary subunits. The complex exists as a monomer or a dimer and forms supercomplexes (SCs) in the inner mitochondrial membrane with ubiquinol-cytochrome c oxidoreductase (cytochrome b-c1 complex, complex III, CIII).

The protein resides in the mitochondrion inner membrane. The enzyme catalyses 4 Fe(II)-[cytochrome c] + O2 + 8 H(+)(in) = 4 Fe(III)-[cytochrome c] + 2 H2O + 4 H(+)(out). Its function is as follows. Component of the cytochrome c oxidase, the last enzyme in the mitochondrial electron transport chain which drives oxidative phosphorylation. The respiratory chain contains 3 multisubunit complexes succinate dehydrogenase (complex II, CII), ubiquinol-cytochrome c oxidoreductase (cytochrome b-c1 complex, complex III, CIII) and cytochrome c oxidase (complex IV, CIV), that cooperate to transfer electrons derived from NADH and succinate to molecular oxygen, creating an electrochemical gradient over the inner membrane that drives transmembrane transport and the ATP synthase. Cytochrome c oxidase is the component of the respiratory chain that catalyzes the reduction of oxygen to water. Electrons originating from reduced cytochrome c in the intermembrane space (IMS) are transferred via the dinuclear copper A center (CU(A)) of subunit 2 and heme A of subunit 1 to the active site in subunit 1, a binuclear center (BNC) formed by heme A3 and copper B (CU(B)). The BNC reduces molecular oxygen to 2 water molecules using 4 electrons from cytochrome c in the IMS and 4 protons from the mitochondrial matrix. The protein is Cytochrome c oxidase subunit 3 (COIII) of Podospora anserina (strain S / ATCC MYA-4624 / DSM 980 / FGSC 10383) (Pleurage anserina).